A 141-amino-acid polypeptide reads, in one-letter code: Large ribosomal subunit protein uL11 (141 aa).

It belongs to the universal ribosomal protein uL11 family. Part of the ribosomal stalk of the 50S ribosomal subunit. Interacts with L10 and the large rRNA to form the base of the stalk. L10 forms an elongated spine to which L12 dimers bind in a sequential fashion forming a multimeric L10(L12)X complex. Post-translationally, one or more lysine residues are methylated.

Its function is as follows. Forms part of the ribosomal stalk which helps the ribosome interact with GTP-bound translation factors. The polypeptide is Large ribosomal subunit protein uL11 (Clostridium botulinum (strain Kyoto / Type A2)).